The primary structure comprises 433 residues: 3-phosphoshikimate 1-carboxyvinyltransferase (433 aa).

3 residues coordinate 3-phosphoshikimate: lysine 23, serine 24, and arginine 28. Lysine 23 contacts phosphoenolpyruvate. Phosphoenolpyruvate is bound by residues glycine 95 and arginine 123. Positions 170, 171, 172, 198, 317, and 344 each coordinate 3-phosphoshikimate. Glutamine 172 is a binding site for phosphoenolpyruvate. Aspartate 317 functions as the Proton acceptor in the catalytic mechanism. Phosphoenolpyruvate is bound by residues arginine 348, arginine 391, and lysine 416.

Belongs to the EPSP synthase family. As to quaternary structure, monomer.

The protein resides in the cytoplasm. It catalyses the reaction 3-phosphoshikimate + phosphoenolpyruvate = 5-O-(1-carboxyvinyl)-3-phosphoshikimate + phosphate. The protein operates within metabolic intermediate biosynthesis; chorismate biosynthesis; chorismate from D-erythrose 4-phosphate and phosphoenolpyruvate: step 6/7. In terms of biological role, catalyzes the transfer of the enolpyruvyl moiety of phosphoenolpyruvate (PEP) to the 5-hydroxyl of shikimate-3-phosphate (S3P) to produce enolpyruvyl shikimate-3-phosphate and inorganic phosphate. The sequence is that of 3-phosphoshikimate 1-carboxyvinyltransferase from Neisseria meningitidis serogroup B (strain ATCC BAA-335 / MC58).